We begin with the raw amino-acid sequence, 149 residues long: Large ribosomal subunit protein bL9 (149 aa).

It belongs to the bacterial ribosomal protein bL9 family.

Its function is as follows. Binds to the 23S rRNA. This Magnetococcus marinus (strain ATCC BAA-1437 / JCM 17883 / MC-1) protein is Large ribosomal subunit protein bL9.